The chain runs to 101 residues: MSQKIRIKLKSYDYSLVDKSAEKIVKTVKATGAIVSGPIPLPTHKRIFTVNRSTFVNKKSREQFELSSYKRLIDIYSSTAKTVDALMKLELPSGVEVEIKV.

Belongs to the universal ribosomal protein uS10 family. As to quaternary structure, part of the 30S ribosomal subunit.

Its function is as follows. Involved in the binding of tRNA to the ribosomes. In Parabacteroides distasonis (strain ATCC 8503 / DSM 20701 / CIP 104284 / JCM 5825 / NCTC 11152), this protein is Small ribosomal subunit protein uS10.